We begin with the raw amino-acid sequence, 575 residues long: U3 small nucleolar RNA-associated protein 9 (575 aa).

2 stretches are compositionally biased toward basic and acidic residues: residues N340–E355 and V364–I375. The segment at N340 to I375 is disordered. 2 positions are modified to phosphoserine: S547 and S564.

Interacts with snoRNA U3. Interacts with MPP10. Component of the ribosomal small subunit (SSU) processome composed of at least 40 protein subunits and snoRNA U3. In the absence of snoRNA3, forms a complex with other t-UTPs. This complex can associate with pre-18S ribosomal RNAs.

It localises to the nucleus. It is found in the nucleolus. Its function is as follows. Involved in nucleolar processing of pre-18S ribosomal RNA. Required for optimal pre-ribosomal RNA transcription by RNA polymerase I together with a subset of U3 proteins required for transcription (t-UTPs). The polypeptide is U3 small nucleolar RNA-associated protein 9 (UTP9) (Saccharomyces cerevisiae (strain ATCC 204508 / S288c) (Baker's yeast)).